A 201-amino-acid polypeptide reads, in one-letter code: Small ribosomal subunit protein uS4c (201 aa).

The region spanning 89–152 is the S4 RNA-binding domain; that stretch reads MRLDNILFRL…NSRTLVQNLL (64 aa).

Belongs to the universal ribosomal protein uS4 family. As to quaternary structure, part of the 30S ribosomal subunit. Contacts protein S5. The interaction surface between S4 and S5 is involved in control of translational fidelity.

The protein resides in the plastid. The protein localises to the chloroplast. Its function is as follows. One of the primary rRNA binding proteins, it binds directly to 16S rRNA where it nucleates assembly of the body of the 30S subunit. In terms of biological role, with S5 and S12 plays an important role in translational accuracy. The polypeptide is Small ribosomal subunit protein uS4c (rps4) (Olimarabidopsis pumila (Dwarf rocket)).